The primary structure comprises 352 residues: Peptide chain release factor 1 (352 aa).

Q233 is modified (N5-methylglutamine). A disordered region spans residues 288 to 309 (NAKDRKEQVGSGDRSERIRTYN). Over residues 289-306 (AKDRKEQVGSGDRSERIR) the composition is skewed to basic and acidic residues.

The protein belongs to the prokaryotic/mitochondrial release factor family. In terms of processing, methylated by PrmC. Methylation increases the termination efficiency of RF1.

It is found in the cytoplasm. Functionally, peptide chain release factor 1 directs the termination of translation in response to the peptide chain termination codons UAG and UAA. This chain is Peptide chain release factor 1, found in Helicobacter pylori (strain HPAG1).